Reading from the N-terminus, the 717-residue chain is Catalase-peroxidase (717 aa).

Residues 1–20 are disordered; the sequence is MSGKCPVMHGGNTSTGTSNK. Positions 11 to 20 are enriched in polar residues; the sequence is GNTSTGTSNK. A cross-link (tryptophyl-tyrosyl-methioninium (Trp-Tyr) (with M-245)) is located at residues 91–219; it reads WHSAGSYRLA…LAAVQMGLIY (129 aa). Residue H92 is the Proton acceptor of the active site. Positions 219 to 245 form a cross-link, tryptophyl-tyrosyl-methioninium (Tyr-Met) (with W-91); that stretch reads YVNPEGVNGQPDPQKTAEQVRETFARM. H260 is a heme b binding site.

Belongs to the peroxidase family. Peroxidase/catalase subfamily. As to quaternary structure, homodimer or homotetramer. The cofactor is heme b. Formation of the three residue Trp-Tyr-Met cross-link is important for the catalase, but not the peroxidase activity of the enzyme.

The catalysed reaction is H2O2 + AH2 = A + 2 H2O. The enzyme catalyses 2 H2O2 = O2 + 2 H2O. Functionally, bifunctional enzyme with both catalase and broad-spectrum peroxidase activity. The polypeptide is Catalase-peroxidase (Chromohalobacter salexigens (strain ATCC BAA-138 / DSM 3043 / CIP 106854 / NCIMB 13768 / 1H11)).